The sequence spans 103 residues: UPF0122 protein FN1394 (103 aa).

This sequence belongs to the UPF0122 family.

In terms of biological role, might take part in the signal recognition particle (SRP) pathway. This is inferred from the conservation of its genetic proximity to ftsY/ffh. May be a regulatory protein. This chain is UPF0122 protein FN1394, found in Fusobacterium nucleatum subsp. nucleatum (strain ATCC 25586 / DSM 15643 / BCRC 10681 / CIP 101130 / JCM 8532 / KCTC 2640 / LMG 13131 / VPI 4355).